Here is a 196-residue protein sequence, read N- to C-terminus: Golgi to ER traffic protein 1 (196 aa).

Residues 1–10 (MFLDLHPYTI) lie on the Lumenal side of the membrane. Residues 11 to 30 (LVSIFIILLVKQIVGRIGKS) form a helical membrane-spanning segment. Over 31–114 (TIQEFVWLLY…SIDKLANVLL (84 aa)) the chain is Cytoplasmic. Residues 76-114 (AKWTKLNRQADKLTSEIQKLNEEIRQSKASIDKLANVLL) are a coiled coil. Residues 115-135 (MVLTTLPIWVARIFFRKTHLF) form a helical membrane-spanning segment. The Lumenal portion of the chain corresponds to 136–159 (YLRSGIFPRYIEWVLALPFFPSGA). A helical transmembrane segment spans residues 160–176 (VGLTVWMFAANSVIHNV). Residues 177 to 196 (ISLVSFAFEKRVEKPVRQKK) are Cytoplasmic-facing.

Belongs to the WRB/GET1 family. As to quaternary structure, component of the Golgi to ER traffic (GET) complex, which is composed of GET1, GET2 and GET3. Within the complex, GET1 and GET2 form a heterotetramer which is stabilized by phosphatidylinositol binding and which binds to the GET3 homodimer.

Its subcellular location is the endoplasmic reticulum membrane. The protein localises to the golgi apparatus membrane. Required for the post-translational delivery of tail-anchored (TA) proteins to the endoplasmic reticulum. Together with GET2, acts as a membrane receptor for soluble GET3, which recognizes and selectively binds the transmembrane domain of TA proteins in the cytosol. The GET complex cooperates with the HDEL receptor ERD2 to mediate the ATP-dependent retrieval of resident ER proteins that contain a C-terminal H-D-E-L retention signal from the Golgi to the ER. The sequence is that of Golgi to ER traffic protein 1 from Candida tropicalis (strain ATCC MYA-3404 / T1) (Yeast).